Reading from the N-terminus, the 221-residue chain is MVDLRYGSGNIFNEKVHGIGIIALGSFLENHGSALPIDTDAKIASYIALNVSIITGAKFLGVVLPSTEYSYVKHGIHDSIKDVINYIKYLVENGRKIGINKFLIINCHGGNTLIKDEISKLNHENCFIRMENVCLTHAATDEVSLGYAVGILSEDKMKTHDPEIYEEIGMVGLKEAREKNEAIDLEARSVEENGVFLDRTHGRFLLNELINNYVEIVRNMI.

Residues Glu29, His31, Asp40, and His108 each contribute to the Fe cation site.

The protein belongs to the creatininase superfamily. FAPy deformylase family. Homodimer. It depends on Fe(2+) as a cofactor. Zn(2+) serves as cofactor.

It carries out the reaction 2-amino-5-formylamino-6-(5-phospho-D-ribosylamino)pyrimidin-4(3H)-one + H2O = 2,5-diamino-6-(1-D-ribosylamino)pyrimidin-4(3H)-one 5'-phosphate + formate + H(+). It participates in cofactor biosynthesis; coenzyme F420 biosynthesis. The protein operates within cofactor biosynthesis; riboflavin biosynthesis. Its function is as follows. Catalyzes the hydrolysis of the formamide of 2-amino-5-formylamino-6-ribosylamino-4(3H)-pyrimidinone 5'-monophosphate (FAPy) to form 2,5-diamino-6-ribosylamino-4(3H)-pyrimidinone 5'-phosphate (APy). This chain is 2-amino-5-formylamino-6-ribosylaminopyrimidin-4(3H)-one 5'-monophosphate deformylase, found in Methanococcus maripaludis (strain C7 / ATCC BAA-1331).